Reading from the N-terminus, the 263-residue chain is Endonuclease 8 (263 aa).

Pro2 serves as the catalytic Schiff-base intermediate with DNA. The Proton donor role is filled by Glu3. Catalysis depends on Lys53, which acts as the Proton donor; for beta-elimination activity. DNA is bound by residues Gln70, Arg125, and Asn169. The segment at 229-263 (KVFHREGKACERCGGVIERSTLSSRPFYGCPVCQK) adopts an FPG-type zinc-finger fold. Arg253 (proton donor; for delta-elimination activity) is an active-site residue.

This sequence belongs to the FPG family. Zn(2+) serves as cofactor.

The enzyme catalyses 2'-deoxyribonucleotide-(2'-deoxyribose 5'-phosphate)-2'-deoxyribonucleotide-DNA = a 3'-end 2'-deoxyribonucleotide-(2,3-dehydro-2,3-deoxyribose 5'-phosphate)-DNA + a 5'-end 5'-phospho-2'-deoxyribonucleoside-DNA + H(+). In terms of biological role, involved in base excision repair of DNA damaged by oxidation or by mutagenic agents. Acts as a DNA glycosylase that recognizes and removes damaged bases. Has a preference for oxidized pyrimidines, such as thymine glycol, 5,6-dihydrouracil and 5,6-dihydrothymine. Has AP (apurinic/apyrimidinic) lyase activity and introduces nicks in the DNA strand. Cleaves the DNA backbone by beta-delta elimination to generate a single-strand break at the site of the removed base with both 3'- and 5'-phosphates. The sequence is that of Endonuclease 8 from Enterobacter sp. (strain 638).